Consider the following 291-residue polypeptide: Small ribosomal subunit biogenesis GTPase RsgA (291 aa).

One can recognise a CP-type G domain in the interval 63 to 221; that stretch reads KNELKRPPVS…IADTPGFSAL (159 aa). GTP contacts are provided by residues 112-115 and 164-172; these read TKKD and GQSGVGKST. Positions 245, 250, 252, and 258 each coordinate Zn(2+).

It belongs to the TRAFAC class YlqF/YawG GTPase family. RsgA subfamily. In terms of assembly, monomer. Associates with 30S ribosomal subunit, binds 16S rRNA. The cofactor is Zn(2+).

It is found in the cytoplasm. One of several proteins that assist in the late maturation steps of the functional core of the 30S ribosomal subunit. Helps release RbfA from mature subunits. May play a role in the assembly of ribosomal proteins into the subunit. Circularly permuted GTPase that catalyzes slow GTP hydrolysis, GTPase activity is stimulated by the 30S ribosomal subunit. This is Small ribosomal subunit biogenesis GTPase RsgA from Staphylococcus aureus (strain Mu50 / ATCC 700699).